We begin with the raw amino-acid sequence, 330 residues long: 5'-AMP-activated protein kinase subunit gamma-1 (330 aa).

The span at 1–12 shows a compositional bias: low complexity; it reads MESVAAESAPAP. Residues 1 to 25 are disordered; it reads MESVAAESAPAPENEHSQETPESNS. CBS domains follow at residues 42 to 102, 124 to 186, and 197 to 259; these read PTSS…KSAL, SFKP…PKPE, and IGTY…NLDV. ADP contacts are provided by residues Arg-69, 84-89, Val-129, 150-151, and Lys-169; these read MLTITD and HR. AMP contacts are provided by residues Arg-69, 84–89, Val-129, His-150, 150–151, Lys-169, Thr-199, Ala-204, 225–226, and 241–244; these read MLTITD, HR, SA, and SKFD. ATP-binding positions include Arg-69, 84–89, Val-129, 150–151, Arg-151, and Lys-169; these read MLTITD and HR. The AMPK pseudosubstrate motif lies at 137-158; it reads LFDAVSSLIRNKIHRLPVIDPE. 241–244 is a binding site for ADP; it reads SKFD. ATP is bound at residue 241-244; that stretch reads SKFD. Ser-260 carries the post-translational modification Phosphoserine; by ULK1. Thr-262 is modified (phosphothreonine; by ULK1). Arg-268 contributes to the ADP binding site. An AMP-binding site is contributed by Arg-268. ATP is bound at residue Arg-268. Position 269 is a phosphoserine; by ULK1 (Ser-269). The CBS 4 domain maps to 271–328; sequence YFEGVLKCYLHETLEAIINRLVEAEVHRLVVVDEHDVVKGIVSLSDILQALVLTGGEK. ADP-binding positions include Leu-276 and 297-298; that span reads HR. AMP-binding positions include Leu-276, His-297, 297–298, and 313–316; these read HR and SLSD. ATP is bound by residues Leu-276 and 297 to 298; that span reads HR.

Belongs to the 5'-AMP-activated protein kinase gamma subunit family. In terms of assembly, AMPK is a heterotrimer of an alpha catalytic subunit (PRKAA1 or PRKAA2), a beta (PRKAB1 or PRKAB2) and a gamma non-catalytic subunits (PRKAG1, PRKAG2 or PRKAG3). Interacts with FNIP1 and FNIP2. Post-translationally, phosphorylated by ULK1 and ULK2; leading to negatively regulate AMPK activity and suggesting the existence of a regulatory feedback loop between ULK1, ULK2 and AMPK. There is some ambiguity for a phosphosite: Ser-260/Thr-262. Glycosylated; O-GlcNAcylated by OGT, promoting the AMP-activated protein kinase (AMPK) activity. In terms of tissue distribution, highly expressed in heart and brain, also found in kidney, white adipose tissue, lung and spleen.

AMP/ATP-binding subunit of AMP-activated protein kinase (AMPK), an energy sensor protein kinase that plays a key role in regulating cellular energy metabolism. In response to reduction of intracellular ATP levels, AMPK activates energy-producing pathways and inhibits energy-consuming processes: inhibits protein, carbohydrate and lipid biosynthesis, as well as cell growth and proliferation. AMPK acts via direct phosphorylation of metabolic enzymes, and by longer-term effects via phosphorylation of transcription regulators. Also acts as a regulator of cellular polarity by remodeling the actin cytoskeleton; probably by indirectly activating myosin. Gamma non-catalytic subunit mediates binding to AMP, ADP and ATP, leading to activate or inhibit AMPK: AMP-binding results in allosteric activation of alpha catalytic subunit (PRKAA1 or PRKAA2) both by inducing phosphorylation and preventing dephosphorylation of catalytic subunits. ADP also stimulates phosphorylation, without stimulating already phosphorylated catalytic subunit. ATP promotes dephosphorylation of catalytic subunit, rendering the AMPK enzyme inactive. In Rattus norvegicus (Rat), this protein is 5'-AMP-activated protein kinase subunit gamma-1 (Prkag1).